The chain runs to 661 residues: Chermesin D/asnovolin J monooxidase nvfH (661 aa).

N12 is a glycosylation site (N-linked (GlcNAc...) asparagine). Residues 89 to 111 form a helical membrane-spanning segment; the sequence is VLIIGAGYGGLLFAVRIIQTGAF. Residues 128 to 131, 140 to 141, and Y146 each bind FAD; these read TWYW and DV. 138–140 serves as a coordination point for NADP(+); the sequence is MCD. NADP(+) contacts are provided by residues 286-292 and 309-310; these read TGATAIQ and RT. N-linked (GlcNAc...) asparagine glycosylation is found at N382 and N538.

This sequence belongs to the FAD-binding monooxygenase family. FAD serves as cofactor.

The protein localises to the membrane. It carries out the reaction chermesin D + AH2 + O2 = asnovolin I + A + H2O. It catalyses the reaction asnovolin J + AH2 + O2 = asnovolin A + A + H2O. The protein operates within secondary metabolite biosynthesis; terpenoid biosynthesis. Chermesin D/asnovolin J monooxidase; part of the gene cluster that mediates the biosynthesis of novofumigatonin, a heavily oxygenated meroterpenoid containing a unique orthoester moiety. The first step of the pathway is the synthesis of 3,5-dimethylorsellinic acid (DMOA) by the polyketide synthase nvfA via condensation of one acetyl-CoA starter unit with 3 malonyl-CoA units and 2 methylations. DMOA is then converted to farnesyl-DMOA by the farnesyltransferase nvfB. Epoxydation by FAD-dependent monooxygenase nvfK, followed by a protonation-initiated cyclization catalyzed by the terpene cyclase nvfL leads to the production of asnavolin H. The short chain dehydrogenase nvfC then as a 3-OH dehydrogenase of asnovolin H to yield chemesin D. There are two branches to synthesize asnovolin A from chemesin D. In one branch, chemesin D undergoes Baeyer-Villiger oxidation by nvfH, methylation by nvfJ, and enoyl reduction by the nvfM D enoylreductase that reduces the double bond between C-5'and C-6', to form respectively asnovolin I, asnovolin K, and asnovolin A. In the other branch, the methylation precedes the Baeyer-Villiger oxidation and the enoyl reduction to yield asnovolin A via the asnovolin J intermediate. Asnovolin A is further converted to fumigatonoid A by the Fe(II)/2-oxoglutarate-dependent dioxygenase nvfI that catalyzes an endoperoxidation reaction. The alpha/beta hydrolase nvfD then acts as an epimerase that converts fumigatonoid A to its C-5' epimer, which then undergoes spontaneous or nvfD-catalyzed lactonization. The following step utilizes the ketoreductase nvfG to produce fumigatonoid B. The dioxygenase nvfE further converts fumigatonoid B into fumigatonoid C. Finally the Fe(II)/2-oxoglutarate-dependent dioxygenase nvfF catalyzes two rounds of oxidation to transform fumigatonoid C into the end product, novofumigatonin A. This Aspergillus novofumigatus (strain IBT 16806) protein is Chermesin D/asnovolin J monooxidase nvfH.